The sequence spans 469 residues: Mitochondrial distribution and morphology protein 10 (469 aa).

Belongs to the MDM10 family. In terms of assembly, component of the ER-mitochondria encounter structure (ERMES) or MDM complex, composed of MMM1, MDM10, MDM12 and MDM34. Associates with the mitochondrial outer membrane sorting assembly machinery SAM(core) complex.

It is found in the mitochondrion outer membrane. Functionally, component of the ERMES/MDM complex, which serves as a molecular tether to connect the endoplasmic reticulum and mitochondria. Components of this complex are involved in the control of mitochondrial shape and protein biogenesis and may function in phospholipid exchange. MDM10 is involved in the late assembly steps of the general translocase of the mitochondrial outer membrane (TOM complex). Functions in the TOM40-specific route of the assembly of outer membrane beta-barrel proteins, including the association of TOM40 with the receptor TOM22 and small TOM proteins. Can associate with the SAM(core) complex as well as the MDM12-MMM1 complex, both involved in late steps of the major beta-barrel assembly pathway, that is responsible for biogenesis of all outer membrane beta-barrel proteins. May act as a switch that shuttles between both complexes and channels precursor proteins into the TOM40-specific pathway. Plays a role in mitochondrial morphology and in the inheritance of mitochondria. In Scheffersomyces stipitis (strain ATCC 58785 / CBS 6054 / NBRC 10063 / NRRL Y-11545) (Yeast), this protein is Mitochondrial distribution and morphology protein 10.